We begin with the raw amino-acid sequence, 303 residues long: tRNA pseudouridine synthase B (303 aa).

Catalysis depends on D38, which acts as the Nucleophile.

The protein belongs to the pseudouridine synthase TruB family. Type 1 subfamily.

It catalyses the reaction uridine(55) in tRNA = pseudouridine(55) in tRNA. Functionally, responsible for synthesis of pseudouridine from uracil-55 in the psi GC loop of transfer RNAs. This chain is tRNA pseudouridine synthase B, found in Levilactobacillus brevis (strain ATCC 367 / BCRC 12310 / CIP 105137 / JCM 1170 / LMG 11437 / NCIMB 947 / NCTC 947) (Lactobacillus brevis).